We begin with the raw amino-acid sequence, 239 residues long: uncharacterized protein (239 aa).

Helical transmembrane passes span 4–24 (LIPK…LGMV), 29–49 (VIWH…VYPV), 61–81 (YQKW…ISVF), 84–104 (PPLI…MYFA), 116–136 (VAGV…GMGT), 139–159 (GWAW…SFYV), 180–200 (LLLP…AFIP), and 218–238 (IGIL…LFIT).

The protein to H.influenzae HI_1626.

It localises to the cell membrane. This is an uncharacterized protein from Bacillus subtilis (strain 168).